The following is a 1048-amino-acid chain: B3 domain-containing protein Os02g0598200 (1048 aa).

A disordered region spans residues 1 to 345 (MDGAVRGQGC…QKERVASSDN (345 aa)). A compositionally biased stretch (basic residues) spans 16 to 25 (SFNKTKKKNR). Composition is skewed to basic and acidic residues over residues 26 to 134 (NCSD…SDDM), 151 to 162 (KKNSRNDADEEK), 169 to 214 (CSDD…GDKK), 243 to 253 (KNMKSDGDSYK), 281 to 295 (AKERKMRPSDSMEMK), and 332 to 345 (LKREQKERVASSDN). A DNA-binding region (TF-B3 1) is located at residues 375 to 468 (AFAFFKFVRD…TFSVRVFGID (94 aa)). Residues 505–528 (QYQDSEDIHDGPNVSGESPRSKEP) form a disordered region. Residues 953 to 1048 (LQFCIPSTIQ…LAFQVYITRK (96 aa)) constitute a DNA-binding region (TF-B3 2).

The protein resides in the nucleus. This is B3 domain-containing protein Os02g0598200 from Oryza sativa subsp. japonica (Rice).